The primary structure comprises 366 residues: MPLHHLMIGTWTPPGAIFTVQFDDEKLTCKLIKRTEIPQDEPISWMTFDHERKNIYGAAMKKWSSFAVKSPTEIVHEASHPIGGHPRANDADTNTRAIFLLAAKQPPYAVYANPFYKFAGYGNVFSVSETGKLEKNVQNYEYQENTGIHGMVFDPTETYLYSADLTANKLWTHRKLASGEVELVGSVDAPDPGDHPRWVAMHPTGNYLYALMEAGNRICEYVIDPATHMPVYTHHSFPLIPPGIPDRDPETGKGLYRADVCALTFSGKYMFASSRANKFELQGYIAGFKLRDCGSIEKQLFLSPTPTSGGHSNAVSPCPWSDEWMAITDDQEGWLEIYRWKDEFLHRVARVRIPEPGFGMNAIWYD.

Catalysis depends on residues His-149, Arg-197, Glu-213, and Arg-275.

This sequence belongs to the cycloisomerase 2 family. As to quaternary structure, homotetramer.

The catalysed reaction is 3-carboxy-2,5-dihydro-5-oxofuran-2-acetate = 3-carboxy-cis,cis-muconate. It participates in aromatic compound metabolism; beta-ketoadipate pathway; 3-carboxy-cis,cis-muconate from 3-carboxy-2,5-dihydro-5-oxofuran-2-acetate: step 1/1. Functionally, catalyzes a syn cycloisomerization. Also possesses mle activity. In Neurospora crassa (strain ATCC 24698 / 74-OR23-1A / CBS 708.71 / DSM 1257 / FGSC 987), this protein is Carboxy-cis,cis-muconate cyclase.